Consider the following 261-residue polypeptide: MDISCEIEECKTREQQNSKRSAKACWGTVFSDLGALMSIALPMLMYFTFTKNDFDTSPLLKVVMLLFPCSYSAAGYFLLCYSSRTAHHKTGILYHLLNVLLVTFAAISILSIIVLPIEKWSKRLLGVYSMPSSSFVVSLTYLLYTSCDLTTASFTDTGITAFVELLSLLFLMSYPIFLTRNPEYYPYLSIISAILILARSFKEKYFPNKKTSESVVRWRLLIFFVILGFTTFSYIMAGLSCLHIIKEKCENFAGNQQILNK.

The protein belongs to the UPF0328 family.

In Encephalitozoon cuniculi (strain GB-M1) (Microsporidian parasite), this protein is UPF0328 protein ECU03_1620.